The sequence spans 450 residues: NADH-ubiquinone oxidoreductase chain 2 (450 aa).

Transmembrane regions (helical) follow at residues 25–45 (GTIT…IVAM), 58–78 (LTPY…MLLM), 90–110 (SPFY…FPLV), 113–133 (LIAL…LTGL), 145–165 (LLYF…SYFV), 186–206 (AFDY…MAPL), 219–239 (TYIT…WIFA), 248–268 (VTIL…LFQV), 272–292 (TMLA…MMSY), 295–315 (AFYI…LGML), 344–364 (LAFS…TPGF), 385–405 (AIVV…KVLF), and 414–436 (NFIN…SFFM).

The protein belongs to the complex I subunit 2 family.

The protein resides in the mitochondrion inner membrane. It catalyses the reaction a ubiquinone + NADH + 5 H(+)(in) = a ubiquinol + NAD(+) + 4 H(+)(out). Its function is as follows. Core subunit of the mitochondrial membrane respiratory chain NADH dehydrogenase (Complex I) that is believed to belong to the minimal assembly required for catalysis. Complex I functions in the transfer of electrons from NADH to the respiratory chain. The immediate electron acceptor for the enzyme is believed to be ubiquinone. The polypeptide is NADH-ubiquinone oxidoreductase chain 2 (ND2) (Debaryomyces hansenii (strain ATCC 36239 / CBS 767 / BCRC 21394 / JCM 1990 / NBRC 0083 / IGC 2968) (Yeast)).